The following is an 82-amino-acid chain: MMKLVLFSVIVILFSLIGSIHGADVPGNYPLDRSGKKYPCTITWKKNPSCIQICKKHGVKYGYCFDFQCWCEIFGRLKTFKI.

Positions 1 to 22 are cleaved as a signal peptide; sequence MMKLVLFSVIVILFSLIGSIHG. Residues 25-82 form the LCN-type CS-alpha/beta domain; it reads VPGNYPLDRSGKKYPCTITWKKNPSCIQICKKHGVKYGYCFDFQCWCEIFGRLKTFKI. 3 disulfides stabilise this stretch: C40–C64, C50–C69, and C54–C71.

It belongs to the long (3 C-C) scorpion toxin superfamily. Sodium channel inhibitor family. Beta subfamily. In terms of tissue distribution, expressed by the venom gland.

It localises to the secreted. In terms of biological role, shifts the voltage of activation of para/tipE voltage-dependent sodium channels (Nav) toward more negative potentials. This chain is Beta-insect toxin AaBTxL1, found in Androctonus australis (Sahara scorpion).